We begin with the raw amino-acid sequence, 444 residues long: Glutamate--tRNA ligase 2 (444 aa).

The 'HIGH' region signature appears at 8–18 (PSPTGHLHAGN). The short motif at 241-245 (KLSKR) is the 'KMSKS' region element. Lys-244 is an ATP binding site.

Belongs to the class-I aminoacyl-tRNA synthetase family. Glutamate--tRNA ligase type 1 subfamily. As to quaternary structure, monomer.

The protein resides in the cytoplasm. It catalyses the reaction tRNA(Glu) + L-glutamate + ATP = L-glutamyl-tRNA(Glu) + AMP + diphosphate. Its function is as follows. Catalyzes the attachment of glutamate to tRNA(Glu) in a two-step reaction: glutamate is first activated by ATP to form Glu-AMP and then transferred to the acceptor end of tRNA(Glu). This chain is Glutamate--tRNA ligase 2, found in Acidiphilium cryptum (strain JF-5).